The sequence spans 226 residues: Ribose-5-phosphate isomerase A (226 aa).

Substrate is bound by residues 28–31, 84–87, and 97–100; these read TGST, DGAD, and KGLG. The Proton acceptor role is filled by Glu-106. Lys-124 lines the substrate pocket.

The protein belongs to the ribose 5-phosphate isomerase family. As to quaternary structure, homodimer.

It carries out the reaction aldehydo-D-ribose 5-phosphate = D-ribulose 5-phosphate. It functions in the pathway carbohydrate degradation; pentose phosphate pathway; D-ribose 5-phosphate from D-ribulose 5-phosphate (non-oxidative stage): step 1/1. Its function is as follows. Catalyzes the reversible conversion of ribose-5-phosphate to ribulose 5-phosphate. This is Ribose-5-phosphate isomerase A from Deinococcus radiodurans (strain ATCC 13939 / DSM 20539 / JCM 16871 / CCUG 27074 / LMG 4051 / NBRC 15346 / NCIMB 9279 / VKM B-1422 / R1).